A 274-amino-acid polypeptide reads, in one-letter code: MSDNTSTATQSTPLLQDTFTVGSRTFSSRLLVGTGKYKDMTETGAAIGASAAEIVTVAIRRTNIGQNSNEPNLLDVISPDKYTILPNTAGCFDAETAIRTCKLARELLGGHNLVKLEVLGDEKTLYPNVMETLKAAKVLIDDGFEVMVYTSDDPIVAQELESMGCVAIMPLGSLIGSGLGLLNRHTLSLIIENAKVPVLVDAGVGTASDAAIAMELGCDGVLMNSAIANAQNPVMMAQAMKHAVWAGRQAFLAGRMPMRKMATASSPQTGYFFQ.

The active-site Schiff-base intermediate with DXP is the Lys-115. Residues Gly-176, 202-203 (AG), and 224-225 (NS) contribute to the 1-deoxy-D-xylulose 5-phosphate site.

This sequence belongs to the ThiG family. Homotetramer. Forms heterodimers with either ThiH or ThiS.

It is found in the cytoplasm. It carries out the reaction [ThiS sulfur-carrier protein]-C-terminal-Gly-aminoethanethioate + 2-iminoacetate + 1-deoxy-D-xylulose 5-phosphate = [ThiS sulfur-carrier protein]-C-terminal Gly-Gly + 2-[(2R,5Z)-2-carboxy-4-methylthiazol-5(2H)-ylidene]ethyl phosphate + 2 H2O + H(+). Its pathway is cofactor biosynthesis; thiamine diphosphate biosynthesis. Catalyzes the rearrangement of 1-deoxy-D-xylulose 5-phosphate (DXP) to produce the thiazole phosphate moiety of thiamine. Sulfur is provided by the thiocarboxylate moiety of the carrier protein ThiS. In vitro, sulfur can be provided by H(2)S. This chain is Thiazole synthase, found in Psychrobacter cryohalolentis (strain ATCC BAA-1226 / DSM 17306 / VKM B-2378 / K5).